Consider the following 279-residue polypeptide: Oxygen-dependent coproporphyrinogen-III oxidase (279 aa).

Residue serine 102 participates in substrate binding. A divalent metal cation-binding residues include histidine 106 and histidine 116. Histidine 116 acts as the Proton donor in catalysis. 118-120 (NTR) is a substrate binding site. Positions 149 and 179 each coordinate a divalent metal cation. The important for dimerization stretch occupies residues 244-279 (YVEFNLLYDRGTKFGLMTDGNVEAILMSLPPEVKFN).

It belongs to the aerobic coproporphyrinogen-III oxidase family. In terms of assembly, homodimer. A divalent metal cation serves as cofactor.

The protein resides in the cytoplasm. It carries out the reaction coproporphyrinogen III + O2 + 2 H(+) = protoporphyrinogen IX + 2 CO2 + 2 H2O. It functions in the pathway porphyrin-containing compound metabolism; protoporphyrin-IX biosynthesis; protoporphyrinogen-IX from coproporphyrinogen-III (O2 route): step 1/1. Its function is as follows. Involved in the heme biosynthesis. Catalyzes the aerobic oxidative decarboxylation of propionate groups of rings A and B of coproporphyrinogen-III to yield the vinyl groups in protoporphyrinogen-IX. This chain is Oxygen-dependent coproporphyrinogen-III oxidase, found in Rickettsia peacockii (strain Rustic).